Here is a 165-residue protein sequence, read N- to C-terminus: Small ribosomal subunit protein uS5 (165 aa).

Positions 13–76 (LEEKVLVVNR…DAARKNLVSI (64 aa)) constitute an S5 DRBM domain.

The protein belongs to the universal ribosomal protein uS5 family. As to quaternary structure, part of the 30S ribosomal subunit. Contacts proteins S4 and S8.

Its function is as follows. With S4 and S12 plays an important role in translational accuracy. In terms of biological role, located at the back of the 30S subunit body where it stabilizes the conformation of the head with respect to the body. The sequence is that of Small ribosomal subunit protein uS5 from Chlamydia muridarum (strain MoPn / Nigg).